Consider the following 213-residue polypeptide: Ras-like protein rasU (213 aa).

21 to 28 (GDGGVGKT) provides a ligand contact to GTP. An Effector region motif is present at residues 43-51 (YDPTIEDLY). GTP-binding positions include 68–72 (DTAGQ) and 126–129 (NKSD). Cys210 carries the cysteine methyl ester modification. A lipid anchor (S-geranylgeranyl cysteine) is attached at Cys210. A propeptide spans 211-213 (KMI) (removed in mature form).

It belongs to the small GTPase superfamily. Ras family.

It is found in the cell membrane. It catalyses the reaction GTP + H2O = GDP + phosphate + H(+). Its function is as follows. Ras proteins bind GDP/GTP and possess intrinsic GTPase activity. The chain is Ras-like protein rasU (rasU) from Dictyostelium discoideum (Social amoeba).